A 416-amino-acid chain; its full sequence is Bifunctional protein GlmU (416 aa).

The interval 1 to 229 is pyrophosphorylase; sequence MTNYAIILAA…FNESLGVNDR (229 aa). UDP-N-acetyl-alpha-D-glucosamine-binding positions include 8–11, K22, Q72, and 77–78; these read LAAG and GT. A Mg(2+)-binding site is contributed by D102. Positions 139, 154, 169, and 227 each coordinate UDP-N-acetyl-alpha-D-glucosamine. Mg(2+) is bound at residue N227. Residues 230 to 250 are linker; sequence VALATAETVMRQRITQKHMVN. The N-acetyltransferase stretch occupies residues 251–416; the sequence is GVTFQNPETV…DSHCTFGSWR (166 aa). 2 residues coordinate UDP-N-acetyl-alpha-D-glucosamine: R332 and K350. The Proton acceptor role is filled by H362. Positions 365 and 376 each coordinate UDP-N-acetyl-alpha-D-glucosamine. Residues A379 and 385–386 contribute to the acetyl-CoA site; that span reads NY.

This sequence in the N-terminal section; belongs to the N-acetylglucosamine-1-phosphate uridyltransferase family. In the C-terminal section; belongs to the transferase hexapeptide repeat family. In terms of assembly, homotrimer. Mg(2+) serves as cofactor.

The protein resides in the cytoplasm. The enzyme catalyses alpha-D-glucosamine 1-phosphate + acetyl-CoA = N-acetyl-alpha-D-glucosamine 1-phosphate + CoA + H(+). It catalyses the reaction N-acetyl-alpha-D-glucosamine 1-phosphate + UTP + H(+) = UDP-N-acetyl-alpha-D-glucosamine + diphosphate. It participates in nucleotide-sugar biosynthesis; UDP-N-acetyl-alpha-D-glucosamine biosynthesis; N-acetyl-alpha-D-glucosamine 1-phosphate from alpha-D-glucosamine 6-phosphate (route II): step 2/2. Its pathway is nucleotide-sugar biosynthesis; UDP-N-acetyl-alpha-D-glucosamine biosynthesis; UDP-N-acetyl-alpha-D-glucosamine from N-acetyl-alpha-D-glucosamine 1-phosphate: step 1/1. It functions in the pathway bacterial outer membrane biogenesis; LPS lipid A biosynthesis. Its function is as follows. Catalyzes the last two sequential reactions in the de novo biosynthetic pathway for UDP-N-acetylglucosamine (UDP-GlcNAc). The C-terminal domain catalyzes the transfer of acetyl group from acetyl coenzyme A to glucosamine-1-phosphate (GlcN-1-P) to produce N-acetylglucosamine-1-phosphate (GlcNAc-1-P), which is converted into UDP-GlcNAc by the transfer of uridine 5-monophosphate (from uridine 5-triphosphate), a reaction catalyzed by the N-terminal domain. This Streptococcus pyogenes serotype M12 (strain MGAS2096) protein is Bifunctional protein GlmU.